The chain runs to 631 residues: DNA mismatch repair protein MutL (631 aa).

It belongs to the DNA mismatch repair MutL/HexB family.

Functionally, this protein is involved in the repair of mismatches in DNA. It is required for dam-dependent methyl-directed DNA mismatch repair. May act as a 'molecular matchmaker', a protein that promotes the formation of a stable complex between two or more DNA-binding proteins in an ATP-dependent manner without itself being part of a final effector complex. The polypeptide is DNA mismatch repair protein MutL (Lactobacillus acidophilus (strain ATCC 700396 / NCK56 / N2 / NCFM)).